Here is a 206-residue protein sequence, read N- to C-terminus: Large ribosomal subunit protein uL4 (206 aa).

A disordered region spans residues 65–85 (KQKGSGGARHGDRKAPQFRGG).

The protein belongs to the universal ribosomal protein uL4 family. In terms of assembly, part of the 50S ribosomal subunit.

Functionally, one of the primary rRNA binding proteins, this protein initially binds near the 5'-end of the 23S rRNA. It is important during the early stages of 50S assembly. It makes multiple contacts with different domains of the 23S rRNA in the assembled 50S subunit and ribosome. In terms of biological role, forms part of the polypeptide exit tunnel. The protein is Large ribosomal subunit protein uL4 of Parvibaculum lavamentivorans (strain DS-1 / DSM 13023 / NCIMB 13966).